The following is a 432-amino-acid chain: MASSSELSLDCKPQSYSMLLKSFGDNFQSDPTTHKLEDLLSRLEQERLKIDAFKRELPLCMQLLNNAVEVYKQQLEAYRANSNNNNQSVGTRPVLEEFIPLRNQPEKTNNKGSNWMTTAQLWSQSETKPKNIDSTTDQSLPKDEINSSPKLGHFDAKQRNGSGAFLPFSKEQSLPELALSTEVKRVSPTNEHTNGQDGNDESMINNDNNYNNNNNNNSNSNGVSSTTSQSNRKARRCWSPDLHRRFVQALQMLGGSQVATPKQIRELMKVDGLTNDEVKSHLQKYRLHTRRPSPSPQTSGGPGPHLVVLGGIWVPPEYTSAHGGTPTLYHHQVHHHHTNTAGPPPPHFCSSQEFYTTPPPPQPLHHHHFQTFNGSSGGTASTDSTHHQVTDSPTVEGKSPESGGGERKGLAALREECEDHSNINGSEITLKF.

A coiled-coil region spans residues 36–81; sequence LEDLLSRLEQERLKIDAFKRELPLCMQLLNNAVEVYKQQLEAYRAN. 2 stretches are compositionally biased toward polar residues: residues 123–139 and 187–197; these read SQSE…TDQS and SPTNEHTNGQD. Residues 123–237 are disordered; sequence SQSETKPKNI…SQSNRKARRC (115 aa). The span at 201-231 shows a compositional bias: low complexity; sequence ESMINNDNNYNNNNNNNSNSNGVSSTTSQSN. Positions 230-290 constitute an HTH myb-type domain; that stretch reads SNRKARRCWS…HLQKYRLHTR (61 aa). Residues 261–286 constitute a DNA-binding region (H-T-H motif); the sequence is PKQIRELMKVDGLTNDEVKSHLQKYR. The interval 354–412 is disordered; that stretch reads FYTTPPPPQPLHHHHFQTFNGSSGGTASTDSTHHQVTDSPTVEGKSPESGGGERKGLAA.

As to quaternary structure, interacts with JMJ30, but not with SVP, FLC or CO. Specifically expressed in vascular tissues of cotyledons, rosette leaves and cauline leaves. Not detected in the vegetative shoot apical meristem.

Its subcellular location is the nucleus. Functionally, transcription factor acting as a flowering repressor, directly repressing FT expression in a dosage-dependent manner in the leaf vasculature. The polypeptide is Myb family transcription factor EFM (Arabidopsis thaliana (Mouse-ear cress)).